The following is a 958-amino-acid chain: Structure-specific endonuclease subunit SLX4 (958 aa).

Disordered stretches follow at residues 89 to 123, 183 to 209, 326 to 400, 531 to 589, 594 to 613, and 655 to 849; these read AESP…KGKT, QKKA…GPID, LATA…LSPT, DLTI…EQHQ, QSNT…SFEL, and STAA…SPPA. Residues 109-121 are compositionally biased toward basic residues; it reads KKPRTAGARKKKG. Over residues 332–341 the composition is skewed to basic and acidic residues; that stretch reads RRPEEAERST. A compositionally biased stretch (polar residues) spans 342–351; sequence LSRQQDTHIP. Low complexity predominate over residues 364-373; that stretch reads AASKSASAKP. Over residues 374–389 the composition is skewed to basic residues; the sequence is KAAKKAPKPRATKKKQ. Over residues 600–610 the composition is skewed to pro residues; sequence QPQPAPPPPPS. 3 stretches are compositionally biased toward low complexity: residues 655 to 666, 775 to 787, and 821 to 838; these read STAAQAAMSTSA, TTSP…RAKA, and PDSG…SSPD.

Belongs to the SLX4 family. As to quaternary structure, forms a heterodimer with SLX1. In terms of processing, phosphorylated in response to DNA damage.

It is found in the nucleus. Its function is as follows. Regulatory subunit of the SLX1-SLX4 structure-specific endonuclease that resolves DNA secondary structures generated during DNA repair and recombination. Has endonuclease activity towards branched DNA substrates, introducing single-strand cuts in duplex DNA close to junctions with ss-DNA. In Chaetomium globosum (strain ATCC 6205 / CBS 148.51 / DSM 1962 / NBRC 6347 / NRRL 1970) (Soil fungus), this protein is Structure-specific endonuclease subunit SLX4.